An 89-amino-acid chain; its full sequence is Arminin 7591 (89 aa).

Residues 1–18 form the signal peptide; sequence MRSAFAVLFLALIAITYS. Residues 19–58 constitute a propeptide that is removed on maturation; sequence KNYEDVKEEIKNEVENEILKDLEEDVNEFDDNVQEEVNDA. At Leu86 the chain carries Leucine amide.

The protein belongs to the arminin family. As to expression, expressed in entodermal epithelium along the body column.

The protein localises to the secreted. The protein resides in the target cell membrane. Its function is as follows. Antimicrobial peptide with a broad-spectrum antimicrobial activity. Keeps its antibacterial activity under a wide range of salt concentrations that mimic physiological conditions of human blood, which is surprising, since Hydra is an obligate freshwater animal with nearly no salt tolerance. Does not affect red blood cells. The protein is Arminin 7591 of Hydra vulgaris (Hydra).